Consider the following 324-residue polypeptide: UDP-N-acetylenolpyruvoylglucosamine reductase (324 aa).

Residues 36 to 203 (FRAGGLAELM…TSVLFEGYPE (168 aa)) enclose the FAD-binding PCMH-type domain. Arginine 183 is an active-site residue. Serine 232 serves as the catalytic Proton donor. Glutamate 302 is an active-site residue.

The protein belongs to the MurB family. FAD is required as a cofactor.

The protein localises to the cytoplasm. It carries out the reaction UDP-N-acetyl-alpha-D-muramate + NADP(+) = UDP-N-acetyl-3-O-(1-carboxyvinyl)-alpha-D-glucosamine + NADPH + H(+). It functions in the pathway cell wall biogenesis; peptidoglycan biosynthesis. Its function is as follows. Cell wall formation. In Rhizobium johnstonii (strain DSM 114642 / LMG 32736 / 3841) (Rhizobium leguminosarum bv. viciae), this protein is UDP-N-acetylenolpyruvoylglucosamine reductase.